The sequence spans 376 residues: Guanine nucleotide-binding protein G(s) subunit alpha (376 aa).

A lipid anchor (N-palmitoyl glycine) is attached at Gly-2. A lipid anchor (S-palmitoyl cysteine) is attached at Cys-3. One can recognise a G-alpha domain in the interval 36–376; sequence GTHRLLLLGA…RMHLRQYELL (341 aa). The segment at 39 to 52 is G1 motif; the sequence is RLLLLGAGESGKST. Residues 44–51, 180–186, 205–209, 274–277, and Ala-348 each bind GTP; these read GAGESGKS, LRCRVLT, DVGGQ, and NKQD. The Mg(2+) site is built by Ser-51 and Thr-186. The G2 motif stretch occupies residues 178-186; the sequence is DILRCRVLT. Positions 201 to 210 are G3 motif; it reads FHMFDVGGQR. The interval 270-277 is G4 motif; that stretch reads ILFLNKQD. Residues 346-351 form a G5 motif region; sequence TCAVDT.

It belongs to the G-alpha family. G(s) subfamily. As to quaternary structure, g proteins are composed of 3 units; alpha, beta and gamma. The alpha chain contains the guanine nucleotide binding site.

Its function is as follows. Guanine nucleotide-binding proteins (G proteins) are involved as modulators or transducers in various transmembrane signaling systems. The G(s) protein is involved in hormonal regulation of adenylate cyclase: it activates the cyclase in response to beta-adrenergic stimuli. The protein is Guanine nucleotide-binding protein G(s) subunit alpha of Lymnaea stagnalis (Great pond snail).